A 66-amino-acid chain; its full sequence is Large ribosomal subunit protein bL35 (66 aa).

Residues 1–26 are compositionally biased toward basic residues; it reads MPKMKTHRGSAKRFKKTASGKLKRGH. The interval 1 to 28 is disordered; it reads MPKMKTHRGSAKRFKKTASGKLKRGHAY.

Belongs to the bacterial ribosomal protein bL35 family.

This chain is Large ribosomal subunit protein bL35, found in Geobacillus thermodenitrificans (strain NG80-2).